The sequence spans 267 residues: ATP synthase subunit a (267 aa).

Helical transmembrane passes span 38 to 58 (WHID…FVFY), 98 to 118 (IAPL…MDLI), 145 to 165 (NITF…SIKI), 208 to 228 (LFGN…MPWW), and 238 to 258 (AIFH…LTIV).

Belongs to the ATPase A chain family. In terms of assembly, F-type ATPases have 2 components, CF(1) - the catalytic core - and CF(0) - the membrane proton channel. CF(1) has five subunits: alpha(3), beta(3), gamma(1), delta(1), epsilon(1). CF(0) has three main subunits: a(1), b(2) and c(9-12). The alpha and beta chains form an alternating ring which encloses part of the gamma chain. CF(1) is attached to CF(0) by a central stalk formed by the gamma and epsilon chains, while a peripheral stalk is formed by the delta and b chains.

It localises to the cell inner membrane. Functionally, key component of the proton channel; it plays a direct role in the translocation of protons across the membrane. This Psychromonas ingrahamii (strain DSM 17664 / CCUG 51855 / 37) protein is ATP synthase subunit a.